The sequence spans 291 residues: Geranyl diphosphate 2-C-methyltransferase (291 aa).

It belongs to the geranyl diphosphate 2-C-methyltransferase family. The cofactor is Mg(2+).

The catalysed reaction is (2E)-geranyl diphosphate + S-adenosyl-L-methionine = (E)-2-methylgeranyl diphosphate + S-adenosyl-L-homocysteine + H(+). In terms of biological role, catalyzes the SAM-dependent methylation of geranyl diphosphate (GPP) to yield (E)-2-methylgeranyl diphosphate (2-MeGPP). In Streptomyces ambofaciens (strain ATCC 23877 / 3486 / DSM 40053 / JCM 4204 / NBRC 12836 / NRRL B-2516), this protein is Geranyl diphosphate 2-C-methyltransferase.